The sequence spans 421 residues: Trimethyllysine dioxygenase, mitochondrial (421 aa).

The N-terminal 15 residues, 1-15 (MWYHKLLHQQSRLRN), are a transit peptide targeting the mitochondrion. N6-acetyllysine occurs at positions 179 and 236. Positions 242, 244, and 389 each coordinate Fe cation.

Belongs to the gamma-BBH/TMLD family. As to quaternary structure, homodimer. Fe(2+) is required as a cofactor. The cofactor is L-ascorbate.

Its subcellular location is the mitochondrion matrix. The enzyme catalyses N(6),N(6),N(6)-trimethyl-L-lysine + 2-oxoglutarate + O2 = (3S)-3-hydroxy-N(6),N(6),N(6)-trimethyl-L-lysine + succinate + CO2. The protein operates within amine and polyamine biosynthesis; carnitine biosynthesis. Functionally, converts trimethyllysine (TML) into hydroxytrimethyllysine (HTML). The polypeptide is Trimethyllysine dioxygenase, mitochondrial (Tmlhe) (Mus musculus (Mouse)).